A 167-amino-acid polypeptide reads, in one-letter code: Leptin (167 aa).

The N-terminal stretch at 1-21 is a signal peptide; sequence MCWRPLCRFLWLWSYLSYVQA. A disulfide bond links Cys-117 and Cys-167.

It belongs to the leptin family.

It is found in the secreted. Its function is as follows. Key player in the regulation of energy balance and body weight control. Once released into the circulation, has central and peripheral effects by binding LEPR, found in many tissues, which results in the activation of several major signaling pathways. In the hypothalamus, acts as an appetite-regulating factor that induces a decrease in food intake and an increase in energy consumption by inducing anorexinogenic factors and suppressing orexigenic neuropeptides, also regulates bone mass and secretion of hypothalamo-pituitary-adrenal hormones. In the periphery, increases basal metabolism, influences reproductive function, regulates pancreatic beta-cell function and insulin secretion, is pro-angiogenic for endothelial cell and affects innate and adaptive immunity. In the arcuate nucleus of the hypothalamus, activates by depolarization POMC neurons inducing FOS and SOCS3 expression to release anorexigenic peptides and inhibits by hyperpolarization NPY neurons inducing SOCS3 with a consequent reduction on release of orexigenic peptides. In addition to its known satiety inducing effect, has a modulatory role in nutrient absorption. In the intestine, reduces glucose absorption by enterocytes by activating PKC and leading to a sequential activation of p38, PI3K and ERK signaling pathways which exerts an inhibitory effect on glucose absorption. Acts as a growth factor on certain tissues, through the activation of different signaling pathways increases expression of genes involved in cell cycle regulation such as CCND1, via JAK2-STAT3 pathway, or VEGFA, via MAPK1/3 and PI3K-AKT1 pathways. May also play an apoptotic role via JAK2-STAT3 pathway and up-regulation of BIRC5 expression. Pro-angiogenic, has mitogenic activity on vascular endothelial cells and plays a role in matrix remodeling by regulating the expression of matrix metalloproteinases (MMPs) and tissue inhibitors of metalloproteinases (TIMPs). In innate immunity, modulates the activity and function of neutrophils by increasing chemotaxis and the secretion of oxygen radicals. Increases phagocytosis by macrophages and enhances secretion of pro-inflammatory mediators. Increases cytotoxic ability of NK cells. Plays a pro-inflammatory role, in synergy with IL1B, by inducing NOS2 which promotes the production of IL6, IL8 and Prostaglandin E2, through a signaling pathway that involves JAK2, PI3K, MAP2K1/MEK1 and MAPK14/p38. In adaptive immunity, promotes the switch of memory T-cells towards T helper-1 cell immune responses. Increases CD4(+)CD25(-) T cells proliferation and reduces autophagy during TCR (T cell receptor) stimulation, through MTOR signaling pathway activation and BCL2 up-regulation. The protein is Leptin (Lep) of Mus musculus (Mouse).